Consider the following 238-residue polypeptide: Tetraspanin-4 (238 aa).

The Cytoplasmic portion of the chain corresponds to 1 to 13 (MARACLQAVKYLM). The helical transmembrane segment at 14–34 (FAFNLLFWLGGCGVLGVGIWL) threads the bilayer. At 35–55 (AATQGSFATLSSSFPSLSAAN) the chain is on the extracellular side. A helical transmembrane segment spans residues 56–76 (LLIITGAFVMAIGFVGCLGAI). Residues 77–85 (KENKCLLLT) are Cytoplasmic-facing. The chain crosses the membrane as a helical span at residues 86-106 (FFLLLLLVFLLEATIAILFFA). Residues 107 to 201 (YTDKIDRYAQ…ETVKVWLQEN (95 aa)) are Extracellular-facing. N-linked (GlcNAc...) asparagine glycosylation is found at asparagine 152 and asparagine 161. Residues 202 to 222 (LLAVGIFGLCTALVQILGLTF) traverse the membrane as a helical segment. The Cytoplasmic portion of the chain corresponds to 223-238 (AMTMYCQVVKADTYCA).

Belongs to the tetraspanin (TM4SF) family. As to quaternary structure, forms a complex with integrins. Interacts with HRH4. As to expression, expressed in multiple tissues but is absent in brain, lymphoid cells, and platelets.

It localises to the cell membrane. Its function is as follows. Structural component of specialized membrane microdomains known as tetraspanin-enriched microdomains (TERMs), which act as platforms for receptor clustering and signaling. Plays an essential role in migrasome formation and migration on retracting fibers at the rear end of migrating cells. Migrasomes are cellular organelles that form as large vesicle-like structures on retraction fibers of migrating cells. Mechanistically, acts as a membrane curvature sensor and participates in stabilizing the migrasome structure in a late stage of biogenesis. May also play a regulatory role for the histamine H4 receptor/HRH4 without affecting histamine binding to HRH4 or signaling. The sequence is that of Tetraspanin-4 (TSPAN4) from Homo sapiens (Human).